A 310-amino-acid polypeptide reads, in one-letter code: Nodulation protein D 2 (310 aa).

Residues Leu-6–Thr-63 form the HTH lysR-type domain. The segment at residues Leu-23–Ala-42 is a DNA-binding region (H-T-H motif).

The protein belongs to the LysR transcriptional regulatory family.

Functionally, nodD regulates the expression of the nodABCFE genes which encode other nodulation proteins. NodD is also a negative regulator of its own expression. Binds flavonoids as inducers. The chain is Nodulation protein D 2 (nodD2) from Rhizobium meliloti (strain 1021) (Ensifer meliloti).